The chain runs to 233 residues: Purine nucleoside phosphorylase DeoD-type (233 aa).

H4 is a binding site for a purine D-ribonucleoside. Phosphate contacts are provided by residues G20, R24, R43, and 87-90; that span reads RVGT. Residues 178–180 and 202–203 contribute to the a purine D-ribonucleoside site; these read EME and SD. Residue D203 is the Proton donor of the active site.

The protein belongs to the PNP/UDP phosphorylase family. In terms of assembly, homohexamer; trimer of homodimers.

It catalyses the reaction a purine D-ribonucleoside + phosphate = a purine nucleobase + alpha-D-ribose 1-phosphate. It carries out the reaction a purine 2'-deoxy-D-ribonucleoside + phosphate = a purine nucleobase + 2-deoxy-alpha-D-ribose 1-phosphate. Catalyzes the reversible phosphorolytic breakdown of the N-glycosidic bond in the beta-(deoxy)ribonucleoside molecules, with the formation of the corresponding free purine bases and pentose-1-phosphate. The sequence is that of Purine nucleoside phosphorylase DeoD-type from Listeria innocua serovar 6a (strain ATCC BAA-680 / CLIP 11262).